A 519-amino-acid chain; its full sequence is Cytochrome P450 monooxygenase easM (519 aa).

A helical membrane pass occupies residues 16–33 (VAPALFASSISVLFLILS). 2 N-linked (GlcNAc...) asparagine glycosylation sites follow: Asn50 and Asn353. Position 458 (Cys458) interacts with heme.

This sequence belongs to the cytochrome P450 family. Heme is required as a cofactor.

The protein localises to the membrane. The protein operates within alkaloid biosynthesis; ergot alkaloid biosynthesis. Cytochrome P450 monooxygenase; part of the gene cluster that mediates the biosynthesis of fumiclavanine C, a fungal ergot alkaloid. DmaW catalyzes the first step of ergot alkaloid biosynthesis by condensing dimethylallyl diphosphate (DMAP) and tryptophan to form 4-dimethylallyl-L-tryptophan. The second step is catalyzed by the methyltransferase easF that methylates 4-dimethylallyl-L-tryptophan in the presence of S-adenosyl-L-methionine, resulting in the formation of 4-dimethylallyl-L-abrine. The catalase easC and the FAD-dependent oxidoreductase easE then transform 4-dimethylallyl-L-abrine to chanoclavine-I which is further oxidized by EasD in the presence of NAD(+), resulting in the formation of chanoclavine-I aldehyde. EasA reduces chanoclavine-I aldehyde to dihydrochanoclavine-I aldehyde that spontaneously dehydrates to form 6,8-dimethyl-6,7-didehydroergoline. EasG then catalyzes the reduction of 6,8-dimethyl-6,7-didehydroergoline to form festuclavine. Hydrolysis of festuclavine by easM then leads to the formation of fumigaclavine B which is in turn acetylated by easN to fumigaclavine A. Finally, easL catalyzes the conversion of fumigaclavine A into fumigaclavine C by attaching a dimethylallyl moiety to C-2 of the indole nucleus. The chain is Cytochrome P450 monooxygenase easM from Aspergillus fumigatus (strain ATCC MYA-4609 / CBS 101355 / FGSC A1100 / Af293) (Neosartorya fumigata).